The following is a 347-amino-acid chain: S-adenosylmethionine:tRNA ribosyltransferase-isomerase (347 aa).

This sequence belongs to the QueA family. Monomer.

It is found in the cytoplasm. It catalyses the reaction 7-aminomethyl-7-carbaguanosine(34) in tRNA + S-adenosyl-L-methionine = epoxyqueuosine(34) in tRNA + adenine + L-methionine + 2 H(+). Its pathway is tRNA modification; tRNA-queuosine biosynthesis. Its function is as follows. Transfers and isomerizes the ribose moiety from AdoMet to the 7-aminomethyl group of 7-deazaguanine (preQ1-tRNA) to give epoxyqueuosine (oQ-tRNA). The polypeptide is S-adenosylmethionine:tRNA ribosyltransferase-isomerase (Gluconobacter oxydans (strain 621H) (Gluconobacter suboxydans)).